Here is a 1239-residue protein sequence, read N- to C-terminus: DNA polymerase subunit gamma-1 (1239 aa).

The tract at residues Met1–Gln68 is disordered. Composition is skewed to low complexity over residues Val9–Ser36 and Gln44–Gln60. Residues Gln43–Gln55 are does not contribute to polymerase and exonuclease enzymatic activities. Positions Val196–Glu200 match the Exo I motif. Asp198 serves as the catalytic Exonuclease activity. Residues Val267–Arg275 carry the Exo II motif. Residue Ser306 coordinates DNA. A disordered region spans residues Gly318–Pro340. An Exo III motif is present at residues Tyr395–Thr403. Positions Glu506–Gly531 are disordered. Positions Ala510–Gly571 are accessory-interacting determinant. Arg579 contacts RNA. Ser593 is a DNA binding site. The RNA site is built by His754, Gly763, and Lys768. DNA-binding residues include Lys806 and Thr849. Residues Thr858 to Asn864 form a trigger loop region. RNA contacts are provided by Ser863 and Arg869. The Pol A motif lies at Val887–Leu896. A 2'-deoxyribonucleoside 5'-triphosphate contacts are provided by Asp890, Val891, Ser893, Glu895, Arg943, Lys947, and Tyr951. Residues Asp890 and Val891 each coordinate Mg(2+). The short motif at Arg943–Gly958 is the Pol B element. Positions 1094 and 1095 each coordinate DNA. Positions His1134–Val1141 match the Pol C motif. Asp1135 lines the a 2'-deoxyribonucleoside 5'-triphosphate pocket. Position 1135 (Asp1135) interacts with Mg(2+).

It belongs to the DNA polymerase type-A family. As to quaternary structure, heterotrimer composed of a catalytic subunit and a homodimer of accessory subunits (POLG:POLG2). Interacts with TTC3. Interacts with LIG3. The cofactor is Mg(2+).

The protein localises to the mitochondrion. Its subcellular location is the mitochondrion matrix. The protein resides in the mitochondrion nucleoid. It carries out the reaction DNA(n) + a 2'-deoxyribonucleoside 5'-triphosphate = DNA(n+1) + diphosphate. The enzyme catalyses a 3'-end 2'-deoxyribonucleotidyl-deoxyribonucleotide-DNA + H2O = a 3'-end 2'-deoxyribonucleotide-DNA + a 2'-deoxyribonucleoside 5'-phosphate + H(+). The catalysed reaction is a 5'-end 2'-deoxyribose-2'-deoxyribonucleotide-DNA = (2E,4S)-4-hydroxypenten-2-al-5-phosphate + a 5'-end 5'-phospho-2'-deoxyribonucleoside-DNA + H(+). With respect to regulation, inhibited by dideoxynucleotides such as antiviral agent zalcitabine. Its function is as follows. Catalytic subunit of DNA polymerase gamma solely responsible for replication of mitochondrial DNA (mtDNA). Replicates both heavy and light strands of the circular mtDNA genome using a single-stranded DNA template, RNA primers and the four deoxyribonucleoside triphosphates as substrates. Has 5' -&gt; 3' polymerase activity. Functionally interacts with TWNK and SSBP1 at the replication fork to form a highly processive replisome, where TWNK unwinds the double-stranded DNA template prior to replication and SSBP1 covers the parental heavy strand to enable continuous replication of the entire mitochondrial genome. A single nucleotide incorporation cycle includes binding of the incoming nucleotide at the insertion site, a phosphodiester bond formation reaction that extends the 3'-end of the primer DNA, and translocation of the primer terminus to the post-insertion site. After completing replication of a mtDNA strand, mediates 3' -&gt; 5' exonucleolytic degradation at the nick to enable proper ligation. Highly accurate due to high nucleotide selectivity and 3' -&gt; 5' exonucleolytic proofreading. Proficiently corrects base substitutions, single-base additions and deletions in non-repetitive sequences and short repeats, but displays lower proofreading activity when replicating longer homopolymeric stretches. Exerts exonuclease activity toward single-stranded DNA and double-stranded DNA containing 3'-terminal mispairs. When a misincorporation occurs, transitions from replication to a pro-nucleolytic editing mode and removes the missincorporated nucleoside in the exonuclease active site. Proceeds via an SN2 nucleolytic mechanism in which Asp-198 catalyzes phosphodiester bond hydrolysis and Glu-200 stabilizes the leaving group. As a result the primer strand becomes one nucleotide shorter and is positioned in the post-insertion site, ready to resume DNA synthesis. Exerts 5'-deoxyribose phosphate (dRP) lyase activity and mediates repair-associated mtDNA synthesis (gap filling) in base-excision repair pathway. Catalyzes the release of the 5'-terminal 2-deoxyribose-5-phosphate sugar moiety from incised apurinic/apyrimidinic (AP) sites to produce a substrate for DNA ligase. The dRP lyase reaction does not require divalent metal ions and likely proceeds via a Schiff base intermediate in a beta-elimination reaction mechanism. The polypeptide is DNA polymerase subunit gamma-1 (Homo sapiens (Human)).